Reading from the N-terminus, the 176-residue chain is NAD(P)H-quinone oxidoreductase subunit 6, chloroplastic (176 aa).

The next 5 membrane-spanning stretches (helical) occupy residues 10–30 (ILVL…VLLT), 33–53 (IYSA…YFLL), 60–80 (VAQL…AVMF), 95–115 (IGDG…MTTI), and 152–172 (FYLP…GAIT).

The protein belongs to the complex I subunit 6 family. In terms of assembly, NDH is composed of at least 16 different subunits, 5 of which are encoded in the nucleus.

It localises to the plastid. The protein localises to the chloroplast thylakoid membrane. The catalysed reaction is a plastoquinone + NADH + (n+1) H(+)(in) = a plastoquinol + NAD(+) + n H(+)(out). It carries out the reaction a plastoquinone + NADPH + (n+1) H(+)(in) = a plastoquinol + NADP(+) + n H(+)(out). NDH shuttles electrons from NAD(P)H:plastoquinone, via FMN and iron-sulfur (Fe-S) centers, to quinones in the photosynthetic chain and possibly in a chloroplast respiratory chain. The immediate electron acceptor for the enzyme in this species is believed to be plastoquinone. Couples the redox reaction to proton translocation, and thus conserves the redox energy in a proton gradient. This Brachypodium distachyon (Purple false brome) protein is NAD(P)H-quinone oxidoreductase subunit 6, chloroplastic (ndhG).